Consider the following 262-residue polypeptide: Pyridoxine 5'-phosphate synthase (262 aa).

Asn-6 lines the 3-amino-2-oxopropyl phosphate pocket. A 1-deoxy-D-xylulose 5-phosphate-binding site is contributed by 8 to 9 (DH). Arg-17 lines the 3-amino-2-oxopropyl phosphate pocket. Catalysis depends on His-43, which acts as the Proton acceptor. 2 residues coordinate 1-deoxy-D-xylulose 5-phosphate: Arg-45 and His-50. Glu-70 (proton acceptor) is an active-site residue. Thr-102 serves as a coordination point for 1-deoxy-D-xylulose 5-phosphate. The active-site Proton donor is His-215. 3-amino-2-oxopropyl phosphate-binding positions include Gly-216 and 237–238 (GH).

It belongs to the PNP synthase family. Homooctamer; tetramer of dimers.

It is found in the cytoplasm. The enzyme catalyses 3-amino-2-oxopropyl phosphate + 1-deoxy-D-xylulose 5-phosphate = pyridoxine 5'-phosphate + phosphate + 2 H2O + H(+). The protein operates within cofactor biosynthesis; pyridoxine 5'-phosphate biosynthesis; pyridoxine 5'-phosphate from D-erythrose 4-phosphate: step 5/5. Catalyzes the complicated ring closure reaction between the two acyclic compounds 1-deoxy-D-xylulose-5-phosphate (DXP) and 3-amino-2-oxopropyl phosphate (1-amino-acetone-3-phosphate or AAP) to form pyridoxine 5'-phosphate (PNP) and inorganic phosphate. This Helicobacter pylori (strain ATCC 700392 / 26695) (Campylobacter pylori) protein is Pyridoxine 5'-phosphate synthase.